We begin with the raw amino-acid sequence, 343 residues long: Signaling lymphocytic activation molecule (343 aa).

Residues 1–24 (MDPKGSLSWRILLFLSLAFELSYG) form the signal peptide. Over 25–242 (TGGGVMDCPV…KQESSSESSP (218 aa)) the chain is Extracellular. The region spanning 29–138 (VMDCPVILQK…VQQFCKQLKL (110 aa)) is the Ig-like V-type domain. 9 N-linked (GlcNAc...) asparagine glycosylation sites follow: asparagine 54, asparagine 58, asparagine 103, asparagine 126, asparagine 151, asparagine 158, asparagine 192, asparagine 211, and asparagine 226. In terms of domain architecture, Ig-like C2-type spans 145–228 (PEIKVLNKTQ…SSISRTFNLS (84 aa)). Intrachain disulfides connect cysteine 161/cysteine 232 and cysteine 167/cysteine 212. Residues 243–265 (WMQYTLVPLGVVIIFILVFTAII) form a helical membrane-spanning segment. The Cytoplasmic segment spans residues 266-343 (MMKRQGKSNH…VYASVTLPES (78 aa)). An ITSM 1 motif is present at residues 286–291 (TIYAQV). Residues tyrosine 288, tyrosine 315, and tyrosine 335 each carry the phosphotyrosine; by FYN modification. Positions 313-318 (TIYVAA) match the SH2-binding motif. The disordered stretch occupies residues 320-343 (EPAPESVQEPNPTTVYASVTLPES). A compositionally biased stretch (polar residues) spans 327–343 (QEPNPTTVYASVTLPES). Positions 333-338 (TVYASV) match the ITSM 2 motif.

Interacts (via cytoplasmic domain) with SH2D1A and SH2D1B; SH2D1A mediates association with FYN; SH2D1A binds to phosphorylated and not phosphorylated ITSM 1. Interacts (via cytoplasmic domain phosphorylated on tyrosine residues) with INPP5D and PTPN11; presence of SH2D1A facilitates binding to INPP5D. Interacts with MAP4K1. Interacts with PIK3C3, BECN1 and UVRAG; indicative for an association with PI3K complex II (PI3KC3-C2). Post-translationally, phosphorylated on tyrosine residues by FYN.

Its subcellular location is the cell membrane. Its function is as follows. Self-ligand receptor of the signaling lymphocytic activation molecule (SLAM) family. SLAM receptors triggered by homo- or heterotypic cell-cell interactions are modulating the activation and differentiation of a wide variety of immune cells and thus are involved in the regulation and interconnection of both innate and adaptive immune response. Activities are controlled by presence or absence of small cytoplasmic adapter proteins, SH2D1A/SAP and/or SH2D1B/EAT-2. SLAMF1-induced signal-transduction events in T-lymphocytes are different from those in B-cells. Two modes of SLAMF1 signaling seem to exist: one depending on SH2D1A (and perhaps SH2D1B) and another in which protein-tyrosine phosphatase 2C (PTPN11)-dependent signal transduction operates. Initially it has been proposed that association with SH2D1A prevents binding to inhibitory effectors including INPP5D/SHIP1 and PTPN11/SHP-2. However, signaling is also regulated by SH2D1A which can simultaneously interact with and recruit FYN which subsequently phosphorylates and activates SLAMF1. Mediates IL-2-independent proliferation of activated T-cells during immune responses and induces IFN-gamma production. Downstreaming signaling involves INPP5D, DOK1 and DOK2 leading to inhibited IFN-gamma production in T-cells, and PRKCQ, BCL10 and NFKB1 leading to increased T-cell activation and Th2 cytokine production. Promotes T-cell receptor-induced IL-4 secretion by CD4(+) cells. Inhibits antigen receptor-mediated production of IFN-gamma, but not IL-2, in CD4(-)/CD8(-) T-cells. Required for IL-4 production by germinal centers T follicular helper (T(Fh))cells. May inhibit CD40-induced signal transduction in monocyte-derived dendritic cells. May play a role in allergic responses and may regulate allergen-induced Th2 cytokine and Th1 cytokine secretion. In conjunction with SLAMF6 controls the transition between positive selection and the subsequent expansion and differentiation of the thymocytic natural killer T (NKT) cell lineage. Involved in the peripheral differentiation of indifferent natural killer T (iNKT) cells toward a regulatory NKT2 type. In macrophages involved in down-regulation of IL-12, TNF-alpha and nitric oxide in response to lipopolysaccharide (LPS). In B-cells activates the ERK signaling pathway independently of SH2D1A but implicating both, SYK and INPP5D, and activates Akt signaling dependent on SYK and SH2D1A. In conjunction with CD84/SLAMF5 and SLAMF6 may be a negative regulator of the humoral immune response. Functionally, (Microbial infection) Involved in innate immune response against Gram-negative bacteria in macrophages; probably recognizes OmpC and/or OmpF on the bacterial surface, regulates phagosome maturation and recruitment of the PI3K complex II (PI3KC3-C2) leading to accumulated of PdtIns(3)P and NOX2 activity in the phagosomes. This is Signaling lymphocytic activation molecule (Slamf1) from Mus musculus (Mouse).